The sequence spans 393 residues: 4-hydroxyphenylpyruvate dioxygenase (393 aa).

N-acetylthreonine is present on T2. VOC domains are found at residues 18–152 and 180–338; these read HFHS…KMTF and IIDH…IFTK. H183 lines the Fe cation pocket. S211, S226, and S250 each carry phosphoserine. Fe cation contacts are provided by H266 and E349.

Belongs to the 4HPPD family. In terms of assembly, homodimer. Requires Fe cation as cofactor. In terms of tissue distribution, liver.

The protein localises to the cytoplasm. Its subcellular location is the endoplasmic reticulum membrane. The protein resides in the golgi apparatus membrane. It catalyses the reaction 3-(4-hydroxyphenyl)pyruvate + O2 = homogentisate + CO2. It functions in the pathway amino-acid degradation; L-phenylalanine degradation; acetoacetate and fumarate from L-phenylalanine: step 3/6. Functionally, catalyzes the conversion of 4-hydroxyphenylpyruvic acid to homogentisic acid, one of the steps in tyrosine catabolism. This chain is 4-hydroxyphenylpyruvate dioxygenase (HPD), found in Sus scrofa (Pig).